Consider the following 354-residue polypeptide: Protein-arginine kinase (354 aa).

One can recognise a Phosphagen kinase C-terminal domain in the interval 24-254; it reads IVLSSRIRLA…QQIIQQEKMA (231 aa). ATP contacts are provided by residues 27–31, His-92, Arg-125, 176–180, and 207–212; these read SSRIR, RASVM, and RGIYGE. The RDXXRA motif of the pArg binding pocket involved in allosteric regulation motif lies at 337–342; sequence RDYRRA.

The protein belongs to the ATP:guanido phosphotransferase family.

It carries out the reaction L-arginyl-[protein] + ATP = N(omega)-phospho-L-arginyl-[protein] + ADP + H(+). With respect to regulation, appears to be allosterically activated by the binding of pArg-containing polypeptides to the pArg-binding pocket localized in the C-terminal domain of McsB. Functionally, catalyzes the specific phosphorylation of arginine residues in a large number of proteins. Is part of the bacterial stress response system. Protein arginine phosphorylation has a physiologically important role and is involved in the regulation of many critical cellular processes, such as protein homeostasis, motility, competence, and stringent and stress responses, by regulating gene expression and protein activity. The sequence is that of Protein-arginine kinase from Bacillus cereus (strain AH187).